The primary structure comprises 188 residues: UPF0340 protein BH3766 (188 aa).

The protein belongs to the UPF0340 family.

This chain is UPF0340 protein BH3766, found in Halalkalibacterium halodurans (strain ATCC BAA-125 / DSM 18197 / FERM 7344 / JCM 9153 / C-125) (Bacillus halodurans).